We begin with the raw amino-acid sequence, 433 residues long: Inorganic triphosphatase (433 aa).

A CYTH domain is found at 2–202 (AQEIELKFIV…ARGYHLAQGN (201 aa)). Residues 218 to 433 (KADVEQGLEA…EPFWLHSGKR (216 aa)) form the CHAD domain.

The enzyme catalyses triphosphate + H2O = phosphate + diphosphate. Its activity is regulated as follows. Inhibited by calcium ion and activated by magnesium ion. Involved in the hydrolysis of the beta-gamma-phosphoanhydride linkage of triphosphate-containing substrates (inorganic or nucleoside-linked). Catalyzes the hydrolysis of inorganic triphosphate (PPPi), which could be cytotoxic because of its high affinity for calcium ion, thereby interfering with calcium signaling. It also hydrolyzes slowly thiamine triphosphate (ThTP). YgiF is a specific PPPase, but it contributes only marginally to the total PPPase activity in E.coli, where the main enzyme responsible for hydrolysis of PPPi is inorganic pyrophosphatase (PPase). The polypeptide is Inorganic triphosphatase (ygiF) (Escherichia coli (strain K12)).